We begin with the raw amino-acid sequence, 329 residues long: Holliday junction branch migration complex subunit RuvB (329 aa).

Residues 1-20 are disordered; that stretch reads MSRILEGDPVEGEKSWENEL. Residues 1–181 are large ATPase domain (RuvB-L); it reads MSRILEGDPV…FGIVERLQFY (181 aa). Residues 11–20 are compositionally biased toward basic and acidic residues; sequence EGEKSWENEL. ATP-binding positions include leucine 20, arginine 21, glycine 62, lysine 65, threonine 66, threonine 67, 128–130, arginine 171, tyrosine 181, and arginine 218; that span reads EDY. A Mg(2+)-binding site is contributed by threonine 66. Positions 182-252 are small ATPAse domain (RuvB-S); the sequence is DKDALRQILM…IAVYALNQLG (71 aa). The head domain (RuvB-H) stretch occupies residues 255–329; sequence QYGLDLMDRR…FAKSSVLADK (75 aa). Residues arginine 291, lysine 310, and arginine 315 each coordinate DNA.

Belongs to the RuvB family. In terms of assembly, homohexamer. Forms an RuvA(8)-RuvB(12)-Holliday junction (HJ) complex. HJ DNA is sandwiched between 2 RuvA tetramers; dsDNA enters through RuvA and exits via RuvB. An RuvB hexamer assembles on each DNA strand where it exits the tetramer. Each RuvB hexamer is contacted by two RuvA subunits (via domain III) on 2 adjacent RuvB subunits; this complex drives branch migration. In the full resolvosome a probable DNA-RuvA(4)-RuvB(12)-RuvC(2) complex forms which resolves the HJ.

Its subcellular location is the cytoplasm. It catalyses the reaction ATP + H2O = ADP + phosphate + H(+). The RuvA-RuvB-RuvC complex processes Holliday junction (HJ) DNA during genetic recombination and DNA repair, while the RuvA-RuvB complex plays an important role in the rescue of blocked DNA replication forks via replication fork reversal (RFR). RuvA specifically binds to HJ cruciform DNA, conferring on it an open structure. The RuvB hexamer acts as an ATP-dependent pump, pulling dsDNA into and through the RuvAB complex. RuvB forms 2 homohexamers on either side of HJ DNA bound by 1 or 2 RuvA tetramers; 4 subunits per hexamer contact DNA at a time. Coordinated motions by a converter formed by DNA-disengaged RuvB subunits stimulates ATP hydrolysis and nucleotide exchange. Immobilization of the converter enables RuvB to convert the ATP-contained energy into a lever motion, pulling 2 nucleotides of DNA out of the RuvA tetramer per ATP hydrolyzed, thus driving DNA branch migration. The RuvB motors rotate together with the DNA substrate, which together with the progressing nucleotide cycle form the mechanistic basis for DNA recombination by continuous HJ branch migration. Branch migration allows RuvC to scan DNA until it finds its consensus sequence, where it cleaves and resolves cruciform DNA. The sequence is that of Holliday junction branch migration complex subunit RuvB from Bdellovibrio bacteriovorus (strain ATCC 15356 / DSM 50701 / NCIMB 9529 / HD100).